The primary structure comprises 1342 residues: DNA-directed RNA polymerase subunit beta (1342 aa).

The protein belongs to the RNA polymerase beta chain family. In terms of assembly, the RNAP catalytic core consists of 2 alpha, 1 beta, 1 beta' and 1 omega subunit. When a sigma factor is associated with the core the holoenzyme is formed, which can initiate transcription.

It carries out the reaction RNA(n) + a ribonucleoside 5'-triphosphate = RNA(n+1) + diphosphate. DNA-dependent RNA polymerase catalyzes the transcription of DNA into RNA using the four ribonucleoside triphosphates as substrates. This is DNA-directed RNA polymerase subunit beta from Pectobacterium carotovorum subsp. carotovorum (strain PC1).